Here is an 80-residue protein sequence, read N- to C-terminus: Pigment-dispersing hormone type 2 (80 aa).

A signal peptide spans 1–23 (MARCFVVLAFLALAAMSLQVATA). A77 carries the post-translational modification Alanine amide.

It belongs to the arthropod PDH family. As to expression, eyestalk.

It localises to the secreted. Its function is as follows. The pigment-dispersing hormone causes the migration of the distal retinal pigment into the proximal end of the pigment chromatophore cells and thus decreases the amount of light entering the retinulas. May also function as a neurotransmitter and/or neuromodulator. This is Pigment-dispersing hormone type 2 (PDH2) from Penaeus vannamei (Whiteleg shrimp).